A 243-amino-acid polypeptide reads, in one-letter code: uncharacterized protein (243 aa).

Cys-120 and Cys-157 together coordinate [4Fe-4S] cluster.

In terms of assembly, homodimer. [4Fe-4S] cluster serves as cofactor.

This is an uncharacterized protein from Methanocaldococcus jannaschii (strain ATCC 43067 / DSM 2661 / JAL-1 / JCM 10045 / NBRC 100440) (Methanococcus jannaschii).